A 37-amino-acid chain; its full sequence is SCNTATCVTHRLAGLLSRSGGMVKSNFVPTDVGSEAF.

An intrachain disulfide couples Cys2 to Cys7. Position 37 is a phenylalanine amide (Phe37).

This sequence belongs to the calcitonin family.

It localises to the secreted. In terms of biological role, CGRP1/CALCA is a peptide hormone that induces vasodilation mediated by the CALCRL-RAMP1 receptor complex. Dilates a variety of vessels including the coronary, cerebral and systemic vasculature. Its abundance in the CNS also points toward a neurotransmitter or neuromodulator role. It also elevates platelet cAMP. CGRP1 can also bind and activate CALCR-RAMP1 (AMYR1) receptor complex. The chain is Calcitonin gene-related peptide 1 (CALCA) from Sus scrofa (Pig).